The sequence spans 1082 residues: Probable arabinosyltransferase B (1082 aa).

A run of 13 helical transmembrane segments spans residues 28-50 (WVATIAGLLGFVLSVSIPLLPVT), 223-241 (LAAMLLAIVSTVIALLALW), 262-281 (VTAVDGVVVGGMAIWYVIGA), 333-352 (SIWIRLPDLICALICWLLLS), 359-381 (LGPAVAGSRAAMWAAGLVLLGAW), 420-442 (AITTAAFTLGIQPTGLIAVAALL), 462-481 (WPLIAPLLAAGTVILAVVFA), 522-544 (AISRRVAFVFTAMCLFPSLFMML), 557-574 (AWRLMGIIFATMFFLMFT), 578-600 (WTHHFGLFAAVGGAMAALATVLV), 613-635 (AFLSLVLFVLAFCFASTNGWWYV), 650-672 (GGVQISAIFFALSAIAALWAFWL), and 689-711 (APIPVAAGFMVVVMMASMAIGVV).

This sequence belongs to the emb family.

Its subcellular location is the cell membrane. Arabinosyl transferase responsible for the polymerization of arabinose into the arabinan of arabinogalactan. In Mycolicibacterium smegmatis (Mycobacterium smegmatis), this protein is Probable arabinosyltransferase B (embB).